The sequence spans 233 residues: DNA repair protein RecO (233 aa).

It belongs to the RecO family.

Functionally, involved in DNA repair and RecF pathway recombination. The sequence is that of DNA repair protein RecO from Francisella philomiragia subsp. philomiragia (strain ATCC 25017 / CCUG 19701 / FSC 153 / O#319-036).